The primary structure comprises 321 residues: Peptidase 1 (321 aa).

Positions 1–18 (MKFVLAIASLLVLSTVYA) are cleaved as a signal peptide. Positions 19–98 (RPASIKTFEE…LKTQFDLNAE (80 aa)) are cleaved as a propeptide — activation peptide. 3 disulfide bridges follow: Cys102-Cys216, Cys130-Cys170, and Cys164-Cys202. The active site involves Cys133. An N-linked (GlcNAc...) asparagine glycan is attached at Asn151. Active-site residues include His269 and Arg288.

Belongs to the peptidase C1 family. In terms of assembly, monomer.

The protein resides in the secreted. It catalyses the reaction Broad endopeptidase specificity.. In terms of biological role, thiol protease that hydrolyzes proteins, with a preference for Phe or basic residues. This is Peptidase 1 (DERF1) from Dermatophagoides farinae (American house dust mite).